The primary structure comprises 89 residues: Small ribosomal subunit protein uS15 (89 aa).

It belongs to the universal ribosomal protein uS15 family. In terms of assembly, part of the 30S ribosomal subunit. Forms a bridge to the 50S subunit in the 70S ribosome, contacting the 23S rRNA.

Functionally, one of the primary rRNA binding proteins, it binds directly to 16S rRNA where it helps nucleate assembly of the platform of the 30S subunit by binding and bridging several RNA helices of the 16S rRNA. Forms an intersubunit bridge (bridge B4) with the 23S rRNA of the 50S subunit in the ribosome. This is Small ribosomal subunit protein uS15 from Orientia tsutsugamushi (strain Boryong) (Rickettsia tsutsugamushi).